The following is a 477-amino-acid chain: Chromosomal replication initiator protein DnaA (477 aa).

The domain I, interacts with DnaA modulators stretch occupies residues 1 to 87 (MSDRSDPTHA…AGVSNFAIVV (87 aa)). Positions 87 to 132 (VNPEIAQDAFAQHPEPAAEQPYIETPTITAPTDNPGLPASPSRGDS) are domain II. A disordered region spans residues 112-131 (PTITAPTDNPGLPASPSRGD). Residues 133-349 (RLNPKYGFDT…GTLIRVTAFA (217 aa)) are domain III, AAA+ region. Positions 177, 179, 180, and 181 each coordinate ATP. A domain IV, binds dsDNA region spans residues 350-477 (SLNKTPVDLA…IKQNHRYGKM (128 aa)).

This sequence belongs to the DnaA family. In terms of assembly, oligomerizes as a right-handed, spiral filament on DNA at oriC.

The protein localises to the cytoplasm. Its function is as follows. Plays an essential role in the initiation and regulation of chromosomal replication. ATP-DnaA binds to the origin of replication (oriC) to initiate formation of the DNA replication initiation complex once per cell cycle. Binds the DnaA box (a 9 base pair repeat at the origin) and separates the double-stranded (ds)DNA. Forms a right-handed helical filament on oriC DNA; dsDNA binds to the exterior of the filament while single-stranded (ss)DNA is stabiized in the filament's interior. The ATP-DnaA-oriC complex binds and stabilizes one strand of the AT-rich DNA unwinding element (DUE), permitting loading of DNA polymerase. After initiation quickly degrades to an ADP-DnaA complex that is not apt for DNA replication. Binds acidic phospholipids. The sequence is that of Chromosomal replication initiator protein DnaA from Clavibacter michiganensis subsp. michiganensis (strain NCPPB 382).